Consider the following 225-residue polypeptide: MNLIEFPLLDQTSSNSVISTTPNDLSNWSRLSSLWPLLYGTSCCFIEFASLIGSRFDFDRYGLVPRSSPRQADLILTAGTVTMKMAPSLVRLYEQMPEPKYVIAMGACTITGGMFSTDSYSTVRGVDKLIPVDVYLPGCPPKPEAVIDALTKLRKKISREIVEDRTLSQNKNRCFTTSHKLYVRRSTHTGTYEQELLYQSPSTLDISSETFFKSKSSVPSYKLVN.

Positions 43, 44, 108, and 139 each coordinate [4Fe-4S] cluster.

Belongs to the complex I 20 kDa subunit family. In terms of assembly, NDH is composed of at least 16 different subunits, 5 of which are encoded in the nucleus. [4Fe-4S] cluster serves as cofactor.

It localises to the plastid. Its subcellular location is the chloroplast thylakoid membrane. It carries out the reaction a plastoquinone + NADH + (n+1) H(+)(in) = a plastoquinol + NAD(+) + n H(+)(out). The catalysed reaction is a plastoquinone + NADPH + (n+1) H(+)(in) = a plastoquinol + NADP(+) + n H(+)(out). NDH shuttles electrons from NAD(P)H:plastoquinone, via FMN and iron-sulfur (Fe-S) centers, to quinones in the photosynthetic chain and possibly in a chloroplast respiratory chain. The immediate electron acceptor for the enzyme in this species is believed to be plastoquinone. Couples the redox reaction to proton translocation, and thus conserves the redox energy in a proton gradient. The chain is NAD(P)H-quinone oxidoreductase subunit K, chloroplastic from Triticum aestivum (Wheat).